Here is a 338-residue protein sequence, read N- to C-terminus: Mitoferrin-1 (338 aa).

The disordered stretch occupies residues 1–37 (MELRRGGVGNQAAGRRMDGDCRDGGCGSKDAGSEDYE). 3 Solcar repeats span residues 43–131 (ASVS…MKRT), 141–225 (NSHL…LQEQ), and 232–326 (YNPQ…FKYI). Helical transmembrane passes span 45–64 (VSTH…SIMY), 106–125 (GLNV…FACY), 143–162 (HLAN…AVMN), 200–219 (SYTT…FITY), 234–253 (PQSH…AATT), and 301–320 (GIQA…WSVY).

It belongs to the mitochondrial carrier (TC 2.A.29) family. In terms of assembly, interacts with ACB10; this interaction stabilizes SLC25A37 and enhances the function of SLC25A37 to import mitochondrial iron during erythroid differentiation. As to expression, highly expressed in hematopoietic organs, fetal liver, bone marrow and spleen.

Its subcellular location is the mitochondrion inner membrane. The enzyme catalyses Fe(2+)(in) = Fe(2+)(out). Its function is as follows. Mitochondrial iron transporter that specifically mediates iron uptake in developing erythroid cells, thereby playing an essential role in heme biosynthesis. This chain is Mitoferrin-1 (Slc25a37), found in Mus musculus (Mouse).